Reading from the N-terminus, the 417-residue chain is Phosphatidylcholine:ceramide cholinephosphotransferase 1 (417 aa).

The region spanning 11-74 is the SAM domain; that stretch reads WSPEEVTNWL…LHMIETLKMA (64 aa). Transmembrane regions (helical) follow at residues 140–160, 188–208, 219–239, 280–300, and 308–328; these read FLAFIYALFCFIFTTVTISVV, FSICEINGMILVGLWLVQWLL, FFCIVCTLYLYRCITMYVTTL, MCGDYLYSGHTVILTLTYLFI, and LWWYHWLCWTLSMVGMFCILL. Residue H289 is part of the active site. Residues 329–417 lie on the Cytoplasmic side of the membrane; sequence AHDHYTVDVV…VKYSRLVNDT (89 aa). Residues H332 and D336 contribute to the active site.

It belongs to the sphingomyelin synthase family.

It localises to the golgi apparatus membrane. The catalysed reaction is an N-acylsphing-4-enine + a 1,2-diacyl-sn-glycero-3-phosphocholine = a sphingomyelin + a 1,2-diacyl-sn-glycerol. It catalyses the reaction an N-acylsphing-4-enine + a 1,2-diacyl-sn-glycero-3-phosphoethanolamine = an N-acylsphing-4-enine 1-phosphoethanolamine + a 1,2-diacyl-sn-glycerol. Major sphingomyelin synthase at the Golgi apparatus. Catalyzes the reversible transfer of phosphocholine moiety in sphingomyelin biosynthesis: in the forward reaction transfers phosphocholine head group of phosphatidylcholine (PC) on to ceramide (CER) to form ceramide phosphocholine (sphingomyelin, SM) and diacylglycerol (DAG) as by-product, and in the reverse reaction transfers phosphocholine from SM to DAG to form PC and CER. The direction of the reaction depends on the levels of CER and DAG in Golgi membranes. Converts the newly synthesized CER, that is transported from the endoplasmic reticulum to the trans-Golgi by the Cer transport protein (CERT), to SM. Can form a heteromeric complex with glucosylceramide synthase (GCS) increasing SMS activity and reducing glucosylceramide synthesis, a critical mechanism that controls the metabolic fate of CER in the Golgi. Does not use free phosphorylcholine or CDP-choline as donor. Can also transfer phosphoethanolamine head group of phosphatidylethanolamine (PE) on to CER to form ceramide phosphoethanolamine (CPE). Regulates receptor-mediated signal transduction via mitogenic DAG and proapoptotic CER, as well as via SM, a structural component of membrane rafts that serve as platforms for signal transduction and protein sorting. Plays a role in secretory transport via regulation of DAG pool at the Golgi apparatus and its downstream effects on PRKD1. The chain is Phosphatidylcholine:ceramide cholinephosphotransferase 1 (SGMS1) from Gallus gallus (Chicken).